Consider the following 549-residue polypeptide: SH3 domain-containing protein 21 (549 aa).

The disordered stretch occupies residues 1-56 (MVQSELQLQPRAGRRADASNWGDFGSDKGGLGNTDIPPITPNSQRPPKLSNLTYDS). Polar residues predominate over residues 41–54 (PNSQRPPKLSNLTY). Positions 65–126 (SCPETCRVLF…PDNFVIPPPP (62 aa)) constitute an SH3 domain. Disordered stretches follow at residues 142–303 (PIKE…KPAK) and 332–479 (FKKE…KSKN). The span at 211–220 (QASQQHSASS) shows a compositional bias: low complexity. Composition is skewed to basic and acidic residues over residues 267–280 (PVPKKAPDSDKIPA) and 332–342 (FKKEPSRDNDQ). Composition is skewed to polar residues over residues 343–365 (CQHLPQGGSTQRPESPAPSNNIQ) and 439–456 (VLPQESAPTPQVPHTIQQ). Residues 482–510 (MDVLESLKEEVGLLRSRLELLELKLEQKM) adopt a coiled-coil conformation. Residues 528-549 (QMMQRNRKSFKHAETQTETQTE) are disordered.

This is SH3 domain-containing protein 21 (Sh3d21) from Mus musculus (Mouse).